Consider the following 142-residue polypeptide: Small ribosomal subunit protein uS11 (142 aa).

The interval 1-21 (MPPKTRGAVRKPRRKDKKNIA) is disordered. Positions 7-17 (GAVRKPRRKDK) are enriched in basic residues.

The protein belongs to the universal ribosomal protein uS11 family. As to quaternary structure, part of the 30S ribosomal subunit. Interacts with proteins S7 and S18. Binds to IF-3.

Functionally, located on the platform of the 30S subunit, it bridges several disparate RNA helices of the 16S rRNA. Forms part of the Shine-Dalgarno cleft in the 70S ribosome. The sequence is that of Small ribosomal subunit protein uS11 from Paenarthrobacter aurescens (strain TC1).